The primary structure comprises 104 residues: PLAT domain-containing protein 3 (104 aa).

In terms of domain architecture, PLAT spans 1 to 104 (MSLRLYDSYG…LARDASPYEL (104 aa)).

The sequence is that of PLAT domain-containing protein 3 from Arabidopsis thaliana (Mouse-ear cress).